The following is a 469-amino-acid chain: Asparagine--tRNA ligase (469 aa).

It belongs to the class-II aminoacyl-tRNA synthetase family. In terms of assembly, homodimer.

Its subcellular location is the cytoplasm. It catalyses the reaction tRNA(Asn) + L-asparagine + ATP = L-asparaginyl-tRNA(Asn) + AMP + diphosphate + H(+). The polypeptide is Asparagine--tRNA ligase (Porphyromonas gingivalis (strain ATCC BAA-308 / W83)).